The following is a 266-amino-acid chain: Transcription factor atoh8 (266 aa).

A disordered region spans residues 140 to 164 (AASQAPAGGSERAESPRKRAGEPSG). Residues 150 to 160 (ERAESPRKRAG) are compositionally biased toward basic and acidic residues. Positions 175–188 (TRRLLANARERTRV) are basic motif; degenerate. Residues 175-227 (TRRLLANARERTRVHTISAAFEALRKQVPCYSYGQKLSKLAILRIACNYILSL) enclose the bHLH domain. The segment at 189 to 227 (HTISAAFEALRKQVPCYSYGQKLSKLAILRIACNYILSL) is helix-loop-helix motif.

Its subcellular location is the nucleus. The protein localises to the nucleus speckle. It localises to the cytoplasm. In terms of biological role, transcription factor that binds a palindromic (canonical) core consensus DNA sequence 5'-CANNTG- 3' known as an E-box element, possibly as a heterodimer with other bHLH proteins. During development, is required for heart looping and swim bladder formation by acting in concert with GATA4 and ZFPM1. During the development of both the retina and skeletal muscles is required for neural retinal cell through modulating PAX6 and NEUROG3 expression and myogenic differentiation. This Danio rerio (Zebrafish) protein is Transcription factor atoh8.